Reading from the N-terminus, the 159-residue chain is Cytochrome c-type biogenesis protein CcmE (159 aa).

Over 1–7 (MTPRQRR) the chain is Cytoplasmic. The chain crosses the membrane as a helical; Signal-anchor for type II membrane protein span at residues 8–28 (LGMLLAALACAGIALALVLNA). The Periplasmic segment spans residues 29–159 (FRSNLVFFFS…LAEGERETQR (131 aa)). Heme contacts are provided by His123 and Tyr127.

This sequence belongs to the CcmE/CycJ family.

Its subcellular location is the cell inner membrane. Its function is as follows. Heme chaperone required for the biogenesis of c-type cytochromes. Transiently binds heme delivered by CcmC and transfers the heme to apo-cytochromes in a process facilitated by CcmF and CcmH. This Cupriavidus pinatubonensis (strain JMP 134 / LMG 1197) (Cupriavidus necator (strain JMP 134)) protein is Cytochrome c-type biogenesis protein CcmE.